A 439-amino-acid polypeptide reads, in one-letter code: C4-dicarboxylate transport protein (439 aa).

9 helical membrane-spanning segments follow: residues 9–29 (SLYA…HFLP), 45–65 (LIKM…IAGM), 77–97 (LALL…LIIV), 145–165 (AFAK…GFAL), 185–205 (VLFT…FGAM), 223–243 (LMGA…GIVT), 290–310 (VVGL…AIYL), 332–352 (TLLA…GSGF), and 353–373 (IVLA…LALI). Residues 417–439 (NESPQAADQPEKILDQTNTKLGA) are disordered.

This sequence belongs to the dicarboxylate/amino acid:cation symporter (DAACS) (TC 2.A.23) family.

It localises to the cell inner membrane. Functionally, responsible for the transport of dicarboxylates such as succinate, fumarate, and malate from the periplasm across the membrane. The polypeptide is C4-dicarboxylate transport protein (Janthinobacterium sp. (strain Marseille) (Minibacterium massiliensis)).